The primary structure comprises 373 residues: Chaperone protein DnaJ (373 aa).

Residues 5 to 70 (DFYATLGVAR…EKRAMYDQYG (66 aa)) enclose the J domain. A CR-type zinc finger spans residues 134–212 (GVKKRINIPT…CRGAGRNKAV (79 aa)). Residues C147, C150, C164, C167, C186, C189, C200, and C203 each contribute to the Zn(2+) site. CXXCXGXG motif repeat units lie at residues 147 to 154 (CDVCNGSG), 164 to 171 (CPTCKGSG), 186 to 193 (CPTCHGAG), and 200 to 207 (CVKCRGAG).

It belongs to the DnaJ family. As to quaternary structure, homodimer. It depends on Zn(2+) as a cofactor.

Its subcellular location is the cytoplasm. Participates actively in the response to hyperosmotic and heat shock by preventing the aggregation of stress-denatured proteins and by disaggregating proteins, also in an autonomous, DnaK-independent fashion. Unfolded proteins bind initially to DnaJ; upon interaction with the DnaJ-bound protein, DnaK hydrolyzes its bound ATP, resulting in the formation of a stable complex. GrpE releases ADP from DnaK; ATP binding to DnaK triggers the release of the substrate protein, thus completing the reaction cycle. Several rounds of ATP-dependent interactions between DnaJ, DnaK and GrpE are required for fully efficient folding. Also involved, together with DnaK and GrpE, in the DNA replication of plasmids through activation of initiation proteins. The polypeptide is Chaperone protein DnaJ (Neisseria meningitidis serogroup C (strain 053442)).